Consider the following 578-residue polypeptide: Proline--tRNA ligase (578 aa).

The protein belongs to the class-II aminoacyl-tRNA synthetase family. ProS type 1 subfamily. Homodimer.

Its subcellular location is the cytoplasm. The enzyme catalyses tRNA(Pro) + L-proline + ATP = L-prolyl-tRNA(Pro) + AMP + diphosphate. In terms of biological role, catalyzes the attachment of proline to tRNA(Pro) in a two-step reaction: proline is first activated by ATP to form Pro-AMP and then transferred to the acceptor end of tRNA(Pro). As ProRS can inadvertently accommodate and process non-cognate amino acids such as alanine and cysteine, to avoid such errors it has two additional distinct editing activities against alanine. One activity is designated as 'pretransfer' editing and involves the tRNA(Pro)-independent hydrolysis of activated Ala-AMP. The other activity is designated 'posttransfer' editing and involves deacylation of mischarged Ala-tRNA(Pro). The misacylated Cys-tRNA(Pro) is not edited by ProRS. The sequence is that of Proline--tRNA ligase from Burkholderia cenocepacia (strain HI2424).